Reading from the N-terminus, the 305-residue chain is Translation initiation factor eIF2B subunit alpha (305 aa).

At Lys35 the chain carries N6-acetyllysine.

The protein belongs to the eIF-2B alpha/beta/delta subunits family. In terms of assembly, component of the translation initiation factor 2B (eIF2B) complex which is a heterodecamer of two sets of five different subunits: alpha, beta, gamma, delta and epsilon. Subunits alpha, beta and delta comprise a regulatory subcomplex and subunits epsilon and gamma comprise a catalytic subcomplex. Within the complex, the hexameric regulatory complex resides at the center, with the two heterodimeric catalytic subcomplexes bound on opposite sides.

It is found in the cytoplasm. The protein resides in the cytosol. Activated by the chemical integrated stress response (ISR) inhibitor ISRIB which stimulates guanine nucleotide exchange factor activity for both phosphorylated and unphosphorylated eIF2. Acts as a component of the translation initiation factor 2B (eIF2B) complex, which catalyzes the exchange of GDP for GTP on eukaryotic initiation factor 2 (eIF2) gamma subunit. Its guanine nucleotide exchange factor activity is repressed when bound to eIF2 complex phosphorylated on the alpha subunit, thereby limiting the amount of methionyl-initiator methionine tRNA available to the ribosome and consequently global translation is repressed. This is Translation initiation factor eIF2B subunit alpha (Eif2b1) from Rattus norvegicus (Rat).